Consider the following 181-residue polypeptide: Adenine phosphoribosyltransferase (181 aa).

The protein belongs to the purine/pyrimidine phosphoribosyltransferase family. In terms of assembly, homodimer.

It localises to the cytoplasm. It catalyses the reaction AMP + diphosphate = 5-phospho-alpha-D-ribose 1-diphosphate + adenine. The protein operates within purine metabolism; AMP biosynthesis via salvage pathway; AMP from adenine: step 1/1. Its function is as follows. Catalyzes a salvage reaction resulting in the formation of AMP, that is energically less costly than de novo synthesis. The polypeptide is Adenine phosphoribosyltransferase (Rhodopseudomonas palustris (strain HaA2)).